We begin with the raw amino-acid sequence, 473 residues long: Probable aspartokinase (473 aa).

2 ACT domains span residues 323–392 and 409–473; these read IFGA…FLNN and VVGA…KTNS.

Belongs to the aspartokinase family.

The enzyme catalyses L-aspartate + ATP = 4-phospho-L-aspartate + ADP. It functions in the pathway amino-acid biosynthesis; L-lysine biosynthesis via DAP pathway; (S)-tetrahydrodipicolinate from L-aspartate: step 1/4. It participates in amino-acid biosynthesis; L-methionine biosynthesis via de novo pathway; L-homoserine from L-aspartate: step 1/3. Its pathway is amino-acid biosynthesis; L-threonine biosynthesis; L-threonine from L-aspartate: step 1/5. The protein is Probable aspartokinase of Methanocaldococcus jannaschii (strain ATCC 43067 / DSM 2661 / JAL-1 / JCM 10045 / NBRC 100440) (Methanococcus jannaschii).